The chain runs to 517 residues: Ribonuclease Y (517 aa).

Residues 1–21 (MIESLIALIAAIVGLGIGYLV) form a helical membrane-spanning segment. The KH domain occupies 207–273 (LINVINIKND…TKVIELLVED (67 aa)). Residues 333–426 (ALAHSLEVAH…VCAADTLSAA (94 aa)) enclose the HD domain.

Belongs to the RNase Y family.

The protein resides in the cell membrane. In terms of biological role, endoribonuclease that initiates mRNA decay. The protein is Ribonuclease Y of Campylobacter jejuni subsp. doylei (strain ATCC BAA-1458 / RM4099 / 269.97).